Consider the following 139-residue polypeptide: Thyrotropin subunit beta (139 aa).

The N-terminal stretch at 1-20 (MELSVAMCGLLCLLFSQAVP) is a signal peptide. 6 disulfide bridges follow: cysteine 22-cysteine 72, cysteine 36-cysteine 87, cysteine 39-cysteine 127, cysteine 47-cysteine 103, cysteine 51-cysteine 105, and cysteine 108-cysteine 115. N-linked (GlcNAc...) asparagine glycosylation occurs at asparagine 43.

Belongs to the glycoprotein hormones subunit beta family. Heterodimer of a common alpha chain and a unique beta chain which confers biological specificity to thyrotropin, lutropin, follitropin and gonadotropin.

The protein resides in the secreted. Indispensable for the control of thyroid structure and metabolism. May play some role in the biological processes of the immature fishes. The polypeptide is Thyrotropin subunit beta (tshb) (Salmo salar (Atlantic salmon)).